Consider the following 955-residue polypeptide: MEEFVIPVYSEDEIPYALLSRYPLAIQTNVKIEDVEGKHNVVKIPESDMIDIPKLTIVEAMNYKPARNDGIVVPRLLDITLRAYDDRKSTKSARGIEFMTNARWMKWAIDDRMDIQPLKVTLDHYCSVNHQLFNCVVKANAANADTIYYDYFPLEDYKKRCNHTNLDLLRSLTNMELFHALQGAAYSIKSSYELVAYSERGSLEETYVVGQPKWIHLTRGTRIGNSGLSYERFISSMVQVSVNGKIPDEIANEIAQLNRIRAEWITATYDRGRIRALELCSILSTIGRKMLNTHEEPKDEMDLSTRFQFKLDEKFNRADSEHVNIFGVRGPATDEGRFYALIAIAATDTQKGRVWRTNPYPCLRGALVAAECELGDVYSTLRRVYTWSLRPEYGQHERQLENNKYVFNRINLFDSNLAVGDQIIHWRYEVKASAETTYDSGYMCRHEAEEDELLCKINEDKYKEMLDRMIQGGWDQERFKLHNILTDPNLLTIDFEKDAYLNSRSELVLPDYFDKWISSPMFNARLRITKGEIGTSKKDDPWNNRAVRGYIKPLAESLDFVLGPYYDLRLLFFDETLSLKQEQSAVFQYLSQLDDFPALTQLRGDAVCPHSGGALYTFRKVALFLIGNYEKLSPDLHEGMEHQRYVHPSTGGTYQKRVLEMKDSCQLTCFVIDYIFEKREQLRDTKEARYIVYLIQSLTGTQRLSVLRSTFPNFFQRLLMLKEIKFVRDLNVINFLPLMFLVHDNISYWHRQWSIPMVLFDDTIKLIPVEVGAYANRFGFKSFMNFTRFHPGELKKKQIAEDIHKEFGVVAFEYYTNTKISQGNVHTPVMTTKMDVLRVHLSSLCAGLADSVVYTLPVAHPKKCIVLIIVGDDKLEPHTRSEQIVSRYNYSRKHICGIVSVTIGQNSQLRVHTSGIVKHRVCDKFILKHKCKVILVRMPGYVFGNDELMTKLLNV.

This sequence belongs to the orbivirus VP2 family.

Its subcellular location is the virion. Functionally, the VP2 protein is one of the two proteins (with VP5) which constitute the virus particle outer capsid. It is the major target of the host immunogenic response. Responsible for viral attachment to target host cell, probably by binding to sialic acid. This attachment induces virion internalization predominantly through clathrin-dependent endocytosis. This Antilocapra americana (Pronghorn) protein is Outer capsid protein VP2 (Segment-2).